We begin with the raw amino-acid sequence, 155 residues long: MTKQVEIFTDGSCLGNPGPGGYGAILRYRGHEKTFNEGYHLTTNNRMELMAAIVALEALKEDCDVVISTDSQYVRQGITQWIHNWKKRGWKTADKKPVKNVDLWKRLDAALSHHTIKWEWVKGHAGHPENERCDELARAAAMNPIQEDVGYQPGS.

The region spanning 1–142 (MTKQVEIFTD…CDELARAAAM (142 aa)) is the RNase H type-1 domain. Positions 10, 48, 70, and 134 each coordinate Mg(2+).

Belongs to the RNase H family. In terms of assembly, monomer. Mg(2+) is required as a cofactor.

The protein localises to the cytoplasm. The enzyme catalyses Endonucleolytic cleavage to 5'-phosphomonoester.. Functionally, endonuclease that specifically degrades the RNA of RNA-DNA hybrids. The sequence is that of Ribonuclease H from Enterobacter sp. (strain 638).